Consider the following 67-residue polypeptide: Stomoxyn (67 aa).

The signal sequence occupies residues 1–24 (MNFYKYLVVLVVLVLCLSATQTEA). Thr66 carries the post-translational modification Threonine amide.

In terms of tissue distribution, constitutively expressed in the adult anterior midgut; proventriculus, thoracic and reservoir regions.

Its subcellular location is the secreted. Has antimicrobial activity against most Gram-positive and Gram-negative bacteria, filamentous fungi and yeasts tested. Has trypanolytic effect on T.b.rhodesiense and limited hemolytic activity against bovine red blood cells. Its function is as follows. May play an important role in protecting the stored blood in the anterior midgut from microorganisms prior to digestion. Adopts an amphipathic alpha-helical structure only in the presence of an organic solvent that mimics a phospholipid membrane. The chain is Stomoxyn from Stomoxys calcitrans (Stable fly).